Reading from the N-terminus, the 418-residue chain is Voltage-gated ClC-type chloride channel ClcB (418 aa).

Residues 1–4 are Cytoplasmic-facing; the sequence is MFRR. Residues 5-25 traverse the membrane as a helical segment; it reads LLIATIVGILAAFAVAGFRHA. Residues 26–53 are Periplasmic-facing; the sequence is MLLLEWLFLNNDSGSLVNAATNLSPWRR. The helical transmembrane segment at 54 to 74 threads the bilayer; the sequence is LLTPALGGLAAGLLLMGWQKF. The Cytoplasmic segment spans residues 75 to 145; that stretch reads TQQRPHAPTD…QRFTPRQEWK (71 aa). A helical transmembrane segment spans residues 146–166; it reads LWIACGAAAGMAAAYRAPLAG. At 167–177 the chain is on the periplasmic side; the sequence is SLFIAEVLFGT. Residues 178-200 form a helical membrane-spanning segment; it reads MMLASLGPVIISAVVALLISNLI. Topologically, residues 201-221 are cytoplasmic; it reads NHSDALLYSVQLSVTVQARDY. Residues 222–242 form a helical membrane-spanning segment; sequence ALIISTGVLAGLCGPLLLTLM. Residues 243–257 are Periplasmic-facing; the sequence is NACHRGFVSLKLAPP. A helical transmembrane segment spans residues 258 to 278; it reads WQLALGGLIVGLLSLFTPAVW. The Cytoplasmic segment spans residues 279-290; it reads GNGYSTVQSFLT. Residues 291 to 311 traverse the membrane as a helical segment; it reads APPLLMIIAGIFLCKLCAVLA. At 312–315 the chain is on the periplasmic side; it reads SSGS. Residues 316-336 form a helical membrane-spanning segment; that stretch reads GAPGGVFTPTLFIGLAIGMLY. The Cytoplasmic segment spans residues 337-351; the sequence is GRSLGLWLPDGEEIT. The chain crosses the membrane as a helical span at residues 352–372; that stretch reads LLLGLTGMATLLAATTHAPIM. At 373 to 379 the chain is on the periplasmic side; that stretch reads STLMICE. A helical transmembrane segment spans residues 380–400; sequence MTGEYQLLPGLLIACVIASVI. Topologically, residues 401–418 are cytoplasmic; sequence SRTLHRDSIYRQHTAKHS.

The protein belongs to the chloride channel (TC 2.A.49) family. ClcB subfamily.

The protein resides in the cell inner membrane. Its function is as follows. Probably acts as an electrical shunt for an outwardly-directed proton pump that is linked to amino acid decarboxylation, as part of the extreme acid resistance (XAR) response. The sequence is that of Voltage-gated ClC-type chloride channel ClcB (clcB) from Escherichia coli O6:H1 (strain CFT073 / ATCC 700928 / UPEC).